The chain runs to 610 residues: Elongation factor 4 (610 aa).

Residues 7–189 (SRIRNFSIIA…AIVQRIPPPK (183 aa)) enclose the tr-type G domain. Residues 19–24 (DHGKST) and 136–139 (NKID) each bind GTP.

It belongs to the TRAFAC class translation factor GTPase superfamily. Classic translation factor GTPase family. LepA subfamily.

It localises to the cell inner membrane. The catalysed reaction is GTP + H2O = GDP + phosphate + H(+). Functionally, required for accurate and efficient protein synthesis under certain stress conditions. May act as a fidelity factor of the translation reaction, by catalyzing a one-codon backward translocation of tRNAs on improperly translocated ribosomes. Back-translocation proceeds from a post-translocation (POST) complex to a pre-translocation (PRE) complex, thus giving elongation factor G a second chance to translocate the tRNAs correctly. Binds to ribosomes in a GTP-dependent manner. The sequence is that of Elongation factor 4 from Thermus thermophilus (strain ATCC 27634 / DSM 579 / HB8).